Reading from the N-terminus, the 307-residue chain is Deaminated glutathione amidase, chloroplastic/cytosolic (307 aa).

A chloroplast-targeting transit peptide spans 1 to 36 (MNAYSVSLDFTKPSLFTRITLSSQIPLTMATTVNKT). In terms of domain architecture, CN hydrolase spans 37–286 (VRVAAAQMTS…TGIVVADIDF (250 aa)). Glutamate 76 serves as the catalytic Proton acceptor. Lysine 147 (proton donor) is an active-site residue. Cysteine 188 (nucleophile) is an active-site residue.

This sequence belongs to the nitrilase superfamily. NIT1/NIT2 family.

The protein localises to the plastid. Its subcellular location is the chloroplast. The protein resides in the cytoplasm. It catalyses the reaction N-(4-oxoglutaryl)-L-cysteinylglycine + H2O = L-cysteinylglycine + 2-oxoglutarate. It carries out the reaction N-(4-carboxy-4-oxobutanoyl)-L-ethylglycylglycine + H2O = N-(2-aminobutanoyl)glycine + 2-oxoglutarate. Its function is as follows. Catalyzes the hydrolysis of the amide bond in N-(4-oxoglutarate)-L-cysteinylglycine (deaminated glutathione), a metabolite repair reaction to dispose of the harmful deaminated glutathione. Possesses amidase activity toward deaminated ophthalmate in vitro. The protein is Deaminated glutathione amidase, chloroplastic/cytosolic of Arabidopsis thaliana (Mouse-ear cress).